We begin with the raw amino-acid sequence, 278 residues long: Reaction center protein L chain (278 aa).

3 helical membrane passes run 33 to 56 (GFFGVAGFFFALLGVLLIVWGATI), 90 to 118 (GLWQIITICAIGAFVSWALREVEICRKLG), and 121 to 146 (FHIPFAFAFAIGAYLVLVVVRPILMG). Residues H159 and H179 each contribute to the (7R,8Z)-bacteriochlorophyll b site. Residues 176-205 (NPAHMLAITFFFTNCLALSMHGSLILSVTN) traverse the membrane as a helical segment. H196 provides a ligand contact to Fe cation. A ubiquinone is bound at residue F222. A helical membrane pass occupies residues 231 to 257 (GALAIHRLGLFLALSAVFWSAVCIVIS). A Fe cation-binding site is contributed by H236.

The protein belongs to the reaction center PufL/M/PsbA/D family. Reaction center is composed of four bacteriochlorophylls, two bacteriopheophytins, two ubiquinones, one iron, and two highly hydrophobic polypeptide chains (designated L and M).

It is found in the cellular chromatophore membrane. In terms of biological role, the reaction center is a membrane-bound complex that mediates the initial photochemical event in the electron transfer process of photosynthesis. The protein is Reaction center protein L chain (pufL) of Allochromatium vinosum (strain ATCC 17899 / DSM 180 / NBRC 103801 / NCIMB 10441 / D) (Chromatium vinosum).